The chain runs to 333 residues: Eukaryotic translation initiation factor 2 subunit 2 (333 aa).

Disordered stretches follow at residues 1 to 87, 98 to 117, and 141 to 165; these read MSGD…KSKK, IKDLKIESDVQEPAEPEEDL, and EKDEALEDEDSKKDDGISFSNQTGP. N-acetylserine is present on Ser-2. 2 positions are modified to phosphoserine: Ser-2 and Ser-13. The span at 13–22 shows a compositional bias: basic residues; that stretch reads SKKKKKKKKP. Thr-36 is subject to Phosphothreonine. Over residues 40–51 the composition is skewed to basic and acidic residues; the sequence is ETKEVEPEPTED. A Phosphoserine modification is found at Ser-67. Lys-102 participates in a covalent cross-link: Glycyl lysine isopeptide (Lys-Gly) (interchain with G-Cter in SUMO2). Ser-105 carries the post-translational modification Phosphoserine. The span at 106-117 shows a compositional bias: acidic residues; that stretch reads DVQEPAEPEEDL. 2 positions are modified to phosphoserine: Ser-158 and Ser-218. N6-acetyllysine occurs at positions 265 and 293. The C4-type zinc-finger motif lies at 281–305; sequence CHTCRSPDTILQKDTRLYFLQCETC.

It belongs to the eIF-2-beta/eIF-5 family. As to quaternary structure, eukaryotic translation initiation factor 2 eIF2 is a heterotrimeric complex composed of an alpha (EIF2S1), a beta (EIF2S2) and a gamma (EIF2S3) chain. eIF2 is member of the 43S pre-initiation complex (43S PIC). eIF2 forms a complex with at least CELF1/CUGBP1, CALR, CALR3, EIF2S1, EIF2S2, HSP90B1 and HSPA5. Interacts with BZW2/5MP1. Interacts with EIF5.

The protein localises to the cytoplasm. Its subcellular location is the cytosol. Component of the eIF2 complex that functions in the early steps of protein synthesis by forming a ternary complex with GTP and initiator tRNA. This complex binds to a 40S ribosomal subunit, followed by mRNA binding to form a 43S pre-initiation complex (43S PIC). Junction of the 60S ribosomal subunit to form the 80S initiation complex is preceded by hydrolysis of the GTP bound to eIF2 and release of an eIF2-GDP binary complex. In order for eIF2 to recycle and catalyze another round of initiation, the GDP bound to eIF2 must exchange with GTP by way of a reaction catalyzed by eIF2B. The sequence is that of Eukaryotic translation initiation factor 2 subunit 2 (EIF2S2) from Bos taurus (Bovine).